Consider the following 375-residue polypeptide: MMSKPHHATLESIKYTPGSLRLLDQRKLPLETVFDDVLTVEDIWSAINEMRVRGAPAIAVSAALGIAVATQRKVANGELKSGSEVQAFFLSSCDFVMTSRPTAVNLFNCLRDLKEQVEKLDPTKAAAEVAQACVELAEAVYTKDVAFNEGIMRHGAAHILAVAKAEGRDKVSILTICNTGALATSRYGTALGVVRQLFYDGKLERVYACETRPWNQGARLTVYECVQEGIPCTLICDGAASSLMLNRKIDAVVVGADRICQNGDTANKIGTYNLAVSAKFHGVKLYVAAPSTTLDAKTASGNRVEIEEREPTEITTNMVTKQRVVADGPHLSVWNPVFDITPGELITGGIITEKGVQAPTASAPYYDIASIIAQP.

Catalysis depends on aspartate 257, which acts as the Proton donor.

This sequence belongs to the eIF-2B alpha/beta/delta subunits family. MtnA subfamily.

The protein resides in the cytoplasm. The protein localises to the nucleus. The catalysed reaction is 5-(methylsulfanyl)-alpha-D-ribose 1-phosphate = 5-(methylsulfanyl)-D-ribulose 1-phosphate. It functions in the pathway amino-acid biosynthesis; L-methionine biosynthesis via salvage pathway; L-methionine from S-methyl-5-thio-alpha-D-ribose 1-phosphate: step 1/6. In terms of biological role, catalyzes the interconversion of methylthioribose-1-phosphate (MTR-1-P) into methylthioribulose-1-phosphate (MTRu-1-P). This is Methylthioribose-1-phosphate isomerase from Leishmania infantum.